The chain runs to 145 residues: Large ribosomal subunit protein uL15 (145 aa).

Positions 1–11 are enriched in polar residues; it reads MELHSLKSTPG. A disordered region spans residues 1–48; it reads MELHSLKSTPGSRKEKHRKGRGHAAGKGKQAGKGQSGQRKRSKVRLGF. Positions 14–26 are enriched in basic residues; sequence KEKHRKGRGHAAG.

It belongs to the universal ribosomal protein uL15 family. As to quaternary structure, part of the 50S ribosomal subunit.

In terms of biological role, binds to the 23S rRNA. The sequence is that of Large ribosomal subunit protein uL15 from Mycoplasmopsis pulmonis (strain UAB CTIP) (Mycoplasma pulmonis).